A 632-amino-acid chain; its full sequence is Cleavage stimulation factor subunit 2 tau variant (632 aa).

Positions 16–94 constitute an RRM domain; sequence RSVFVGNIPY…RALRVDNAAS (79 aa). Disordered stretches follow at residues 201–296 and 365–433; these read IPGK…PGGA and YMGP…TRPM. The segment covering 213 to 233 has biased composition (pro residues); it reads PGGPGPSGPGGPGPGPAPGLC. Residues 234–244 are compositionally biased toward low complexity; that stretch reads PGPNVMLNQQN. A compositionally biased stretch (pro residues) spans 275–287; the sequence is APGPIPAAVPGPG. Low complexity predominate over residues 365–375; sequence YMGPPHQGPPM. Composition is skewed to basic and acidic residues over residues 377–390 and 420–433; these read HGHDNRGPASHDMR and RGGRESRGMETRPM. A 1-1; approximate repeat occupies 428–432; the sequence is METRP. Residues 428-466 are 8 X 5 AA tandem repeats of M-E-T-R-[AG]; that stretch reads METRPMETEVLEPRGMERRMETCAMETRGMDARGLEMRG. The stretch at 433–437 is one 1-2; approximate repeat; the sequence is METEV. A 1-3; approximate repeat occupies 438 to 442; that stretch reads LEPRG. One copy of the 1-4; approximate repeat lies at 443 to 446; it reads MERR. One copy of the 1-5; approximate repeat lies at 447–451; that stretch reads METCA. A 1-6 repeat occupies 452 to 456; it reads METRG. Residues 457–461 form a 1-7; approximate repeat; sequence MDARG. One copy of the 1-8; approximate repeat lies at 462–466; sequence LEMRG. The 2-1; approximate repeat unit spans residues 508–512; it reads GGTMQ. The interval 508–565 is 12 X 5 AA tandem repeats of G-[AT]-G-[MI]-Q; that stretch reads GGTMQGAGIQGGGMQGAGMQGGGMQGAGMQGGGMQGAGMQAGMQGASMQGGMQGAGMQ. The stretch at 513 to 517 is one 2-2 repeat; it reads GAGIQ. The stretch at 518–522 is one 2-3; approximate repeat; that stretch reads GGGMQ. A compositionally biased stretch (gly residues) spans 519-543; the sequence is GGMQGAGMQGGGMQGAGMQGGGMQG. Residues 519-590 are disordered; the sequence is GGMQGAGMQG…GQSQVTPQDQ (72 aa). The stretch at 523 to 527 is one 2-4 repeat; it reads GAGMQ. The 2-5; approximate repeat unit spans residues 528 to 532; the sequence is GGGMQ. The stretch at 533–537 is one 2-6 repeat; that stretch reads GAGMQ. One copy of the 2-7; approximate repeat lies at 538 to 542; it reads GGGMQ. A 2-8 repeat occupies 543–547; sequence GAGMQ. The segment covering 544–557 has biased composition (low complexity); it reads AGMQAGMQGASMQG. One copy of the 2-9; approximate repeat lies at 548–551; that stretch reads AGMQ. A 2-10; approximate repeat occupies 552 to 556; it reads GASMQ. The 2-11; approximate repeat unit spans residues 557–560; the sequence is GGMQ. The segment covering 558–574 has biased composition (gly residues); it reads GMQGAGMQGASKQGGGQ. The stretch at 561–565 is one 2-12 repeat; that stretch reads GAGMQ. Residues 575–584 are compositionally biased toward low complexity; the sequence is PSSFSPGQSQ. The residue at position 579 (S579) is a Phosphoserine.

As to expression, expressed in testes, where it is restricted to pachytene spermatocytes and spermatids, and in the brain (at protein level).

Its subcellular location is the nucleus. Its function is as follows. May play a significant role in AAUAAA-independent mRNA polyadenylation in germ cells. Directly involved in the binding to pre-mRNAs. The protein is Cleavage stimulation factor subunit 2 tau variant (Cstf2t) of Mus musculus (Mouse).